Here is a 1599-residue protein sequence, read N- to C-terminus: Lacto-N-biosidase (1599 aa).

Residues 1 to 30 (MTSRQGRQAIAATAAMGVAVALALPTAAFA) constitute a signal peptide (tat-type signal). H150 contacts beta-D-galactosyl-(1-&gt;3)-N-acetyl-D-glucosamine. PbH1 repeat units lie at residues 165–190 (VSYI…DTWK), 224–255 (MSNV…YFMA), 277–299 (FDHV…AVGY), 325–347 (STNV…TLMY), 348–388 (CDRP…WPWR), and 389–437 (CKDP…SFAS). Residues D178, D179, V182, and D238 each coordinate Ca(2+). The beta-D-galactosyl-(1-&gt;3)-N-acetyl-D-glucosamine site is built by K244 and H245. W387, D411, D418, and C441 together coordinate beta-D-galactosyl-(1-&gt;3)-N-acetyl-D-glucosamine. The active-site Proton donor/acceptor is D411. The active-site Nucleophile is D418. The PbH1 7 repeat unit spans residues 469–506 (GPGNHIYNNTVYVDADSQVLTKRSNSQSLFENNIFINA). In terms of domain architecture, FIVAR spans 1436 to 1498 (DKSTLKATVE…NALRDAIDGL (63 aa)). Basic and acidic residues predominate over residues 1494-1509 (AIDGLEKKPVDPDPNP). A disordered region spans residues 1494–1568 (AIDGLEKKPV…DGATTGGKLT (75 aa)). Residues 1535-1558 (DGSGNGSGTGNGSGSGNGSTGSGS) show a composition bias toward gly residues. Residues 1559–1568 (DGATTGGKLT) show a composition bias toward low complexity. The chain crosses the membrane as a helical span at residues 1574–1594 (VAGAAAMVALTAAAGIGLAAA).

The protein belongs to the glycosyl hydrolase 136 (GH136) family. In terms of assembly, homodimer. The cofactor is Ca(2+). Requires Mg(2+) as cofactor. Predicted to be exported by the Tat system. The position of the signal peptide cleavage has not been experimentally proven.

It localises to the cell membrane. The enzyme catalyses beta-D-Gal-(1-&gt;3)-beta-D-GlcNAc-(1-&gt;3)-beta-D-Gal-(1-&gt;4)-D-Glc + H2O = beta-D-galactosyl-(1-&gt;3)-N-acetyl-D-glucosamine + lactose. Requires the chaperone LnbY for its proper folding and active expression. Is potently and competitively inhibited by LNB-PUGNAc and LNB-NHAcDNJ in vitro. In terms of biological role, present in the infant gut, this enzyme is involved in the assimilation of type-1 human milk oligosaccharides (HMOs). It hydrolyzes via a retaining mechanism the beta-D-GlcNAc-(1-&gt;3)-beta-D-Gal linkage in lacto-N-tetraose (LNT or beta-D-Gal-(1-&gt;3)-beta-D-GlcNAc-(1-&gt;3)-beta-D-Gal-(1-&gt;4)-D-Glc), an abundant HMO unique to human breast milk, releasing lacto-N-biose (LNB or beta-D-Gal-(1-&gt;3)-D-GlcNAc) and lactose. With a much lower efficiency, is also able to cleave the same linkage in lacto-N-fucopentaose I (alpha-Fuc(1-&gt;2)-beta-D-Gal-(1-&gt;3)-beta-D-GlcNAc(1-&gt;3)-beta-D-Gal-(1-&gt;4)-D-Glc), and sialyllacto-N-tetraose a (alpha-Neu5Ac-(2-&gt;3)-beta-D-Gal-(1-&gt;3)-beta-D-GlcNAc-(1-&gt;3)-beta-D-Gal-(1-&gt;4)-D-Glc). Is a key enzymatic factor for growth and proliferation of B.longum in the gut ecosystem of breast-fed infants. The sequence is that of Lacto-N-biosidase from Bifidobacterium longum subsp. longum (strain ATCC 15707 / DSM 20219 / JCM 1217 / NCTC 11818 / E194b).